The following is a 358-amino-acid chain: Plancitoxin-1 (358 aa).

The N-terminal stretch at Met-1–Ala-26 is a signal peptide. An N-linked (GlcNAc...) asparagine glycan is attached at Asn-274. Residue His-303 is part of the active site.

Belongs to the DNase II family. In terms of assembly, plancitoxin is a heterodimer of alpha and beta subunits; disulfide-linked by a single disulfide bond. As to expression, venom gland.

It is found in the secreted. It carries out the reaction Endonucleolytic cleavage to nucleoside 3'-phosphates and 3'-phosphooligonucleotide end-products.. Functionally, hydrolyzes DNA with an optimum pH of 7.2. Is potently hepatotoxic. It induces caspase-independent apoptosis (on rat liver cells) through the following procedure: binding to a specific receptor in the cytoplasmic membrane, entering the cell, entering the nucleus and degrading DNA. The sequence is that of Plancitoxin-1 from Acanthaster planci (Crown-of-thorns starfish).